The following is a 344-amino-acid chain: Tripartite motif-containing protein 44 (344 aa).

Disordered regions lie at residues 1-25 (MASG…EPDE) and 68-165 (TPPA…EFDP). Residues 75–92 (GAGKEEAEVKVEQEREIE) are compositionally biased toward basic and acidic residues. Positions 93–165 (SEAGEESESE…ETEAESEFDP (73 aa)) are enriched in acidic residues. The segment at 174-215 (VAKRKCPDHGLDLSTYCQEDRQLICVLCPVIGAHQGHQLSTL) adopts a B box-type zinc-finger fold. Zn(2+) contacts are provided by C179, H182, C201, and H207. Residues 290–325 (AHVTEILADIQSHMDRLMTQMAQAKEQLDTSNESAE) adopt a coiled-coil conformation. The disordered stretch occupies residues 309–344 (QMAQAKEQLDTSNESAEPKAEGDEEGPSGASEEEDT). Residues 330-344 (GDEEGPSGASEEEDT) are compositionally biased toward acidic residues. Phosphoserine is present on residues S336 and S339.

In terms of assembly, interacts (via coiled coil) with TRIM17 (via coiled coil).

May play a role in the process of differentiation and maturation of neuronal cells. May regulate the activity of TRIM17. Is a negative regulator of PAX6 expression. The polypeptide is Tripartite motif-containing protein 44 (TRIM44) (Pongo abelii (Sumatran orangutan)).